Here is a 150-residue protein sequence, read N- to C-terminus: U1 small nuclear ribonucleoprotein C (150 aa).

The Matrin-type zinc finger occupies Y4–D36. Residues S66–Y132 form a disordered region. Basic and acidic residues predominate over residues D80 to K92. A compositionally biased stretch (acidic residues) spans N103–M112. Over residues L115–A130 the composition is skewed to pro residues.

The protein belongs to the U1 small nuclear ribonucleoprotein C family. As to quaternary structure, U1 snRNP is composed of the 7 core Sm proteins B/B', D1, D2, D3, E, F and G that assemble in a heptameric protein ring on the Sm site of the small nuclear RNA to form the core snRNP, and at least 3 U1 snRNP-specific proteins U1-70K, U1-A and U1-C. U1-C interacts with U1 snRNA and the 5' splice-site region of the pre-mRNA.

The protein resides in the nucleus. Component of the spliceosomal U1 snRNP, which is essential for recognition of the pre-mRNA 5' splice-site and the subsequent assembly of the spliceosome. U1-C is directly involved in initial 5' splice-site recognition for both constitutive and regulated alternative splicing. The interaction with the 5' splice-site seems to precede base-pairing between the pre-mRNA and the U1 snRNA. Stimulates commitment or early (E) complex formation by stabilizing the base pairing of the 5' end of the U1 snRNA and the 5' splice-site region. This Candida albicans (strain SC5314 / ATCC MYA-2876) (Yeast) protein is U1 small nuclear ribonucleoprotein C.